The sequence spans 161 residues: Alpha-crystallin A chain (161 aa).

A required for complex formation with BFSP1 and BFSP2 region spans residues 1–51; sequence ALGPFYPSRXXXXXXXXXXXXXXXXXXXXXXXXXXXXQSLFRTVLDSGISE. Gln38 is subject to Deamidated glutamine; partial. The sHSP domain maps to 40-150; that stretch reads LFRTVLDSGI…SHSERAIPVS (111 aa). Lys87 carries the post-translational modification N6-acetyllysine. His88 is a binding site for Zn(2+). Asn89 is modified (deamidated asparagine; partial). Zn(2+)-binding residues include Glu90 and His95. Ser110 carries the post-translational modification Phosphoserine. Asn111 carries the deamidated asparagine; partial modification. Residues Cys119 and Cys130 are joined by a disulfide bond. Gln135 carries the deamidated glutamine; partial modification. The disordered stretch occupies residues 140–161; that stretch reads ASHSERAIPVSREEKPSSAPSS. The span at 141–155 shows a compositional bias: basic and acidic residues; the sequence is SHSERAIPVSREEKP. Residue His142 participates in Zn(2+) binding. Ser150 is a glycosylation site (O-linked (GlcNAc) serine).

This sequence belongs to the small heat shock protein (HSP20) family. As to quaternary structure, heteromer composed of three CRYAA and one CRYAB subunits. Inter-subunit bridging via zinc ions enhances stability, which is crucial as there is no protein turn over in the lens. Can also form homodimers and homotetramers (dimers of dimers) which serve as the building blocks of homooligomers. Within homooligomers, the zinc-binding motif is created from residues of 3 different molecules. His-88 and Glu-90 from one molecule are ligands of the zinc ion, and His-95 and His-142 residues from additional molecules complete the site with tetrahedral coordination geometry. Part of a complex required for lens intermediate filament formation composed of BFSP1, BFSP2 and CRYAA. In terms of processing, undergoes age-dependent proteolytical cleavage at the C-terminus.

It localises to the cytoplasm. The protein localises to the nucleus. Its function is as follows. Contributes to the transparency and refractive index of the lens. In its oxidized form (absence of intramolecular disulfide bond), acts as a chaperone, preventing aggregation of various proteins under a wide range of stress conditions. Required for the correct formation of lens intermediate filaments as part of a complex composed of BFSP1, BFSP2 and CRYAA. In Galegeeska rufescens (East African rufous sengi), this protein is Alpha-crystallin A chain (CRYAA).